Consider the following 316-residue polypeptide: 4-hydroxy-3-methylbut-2-enyl diphosphate reductase (316 aa).

Cysteine 12 contributes to the [4Fe-4S] cluster binding site. (2E)-4-hydroxy-3-methylbut-2-enyl diphosphate-binding residues include histidine 41 and histidine 74. Histidine 41 and histidine 74 together coordinate dimethylallyl diphosphate. The isopentenyl diphosphate site is built by histidine 41 and histidine 74. [4Fe-4S] cluster is bound at residue cysteine 96. Histidine 124 is a binding site for (2E)-4-hydroxy-3-methylbut-2-enyl diphosphate. Histidine 124 lines the dimethylallyl diphosphate pocket. Histidine 124 serves as a coordination point for isopentenyl diphosphate. Glutamate 126 serves as the catalytic Proton donor. Threonine 167 provides a ligand contact to (2E)-4-hydroxy-3-methylbut-2-enyl diphosphate. [4Fe-4S] cluster is bound at residue cysteine 197. Serine 225, serine 226, asparagine 227, and serine 269 together coordinate (2E)-4-hydroxy-3-methylbut-2-enyl diphosphate. The dimethylallyl diphosphate site is built by serine 225, serine 226, asparagine 227, and serine 269. Isopentenyl diphosphate-binding residues include serine 225, serine 226, asparagine 227, and serine 269.

Belongs to the IspH family. In terms of assembly, homodimer. The cofactor is [4Fe-4S] cluster.

The catalysed reaction is isopentenyl diphosphate + 2 oxidized [2Fe-2S]-[ferredoxin] + H2O = (2E)-4-hydroxy-3-methylbut-2-enyl diphosphate + 2 reduced [2Fe-2S]-[ferredoxin] + 2 H(+). It carries out the reaction dimethylallyl diphosphate + 2 oxidized [2Fe-2S]-[ferredoxin] + H2O = (2E)-4-hydroxy-3-methylbut-2-enyl diphosphate + 2 reduced [2Fe-2S]-[ferredoxin] + 2 H(+). It functions in the pathway isoprenoid biosynthesis; dimethylallyl diphosphate biosynthesis; dimethylallyl diphosphate from (2E)-4-hydroxy-3-methylbutenyl diphosphate: step 1/1. It participates in isoprenoid biosynthesis; isopentenyl diphosphate biosynthesis via DXP pathway; isopentenyl diphosphate from 1-deoxy-D-xylulose 5-phosphate: step 6/6. In terms of biological role, catalyzes the conversion of 1-hydroxy-2-methyl-2-(E)-butenyl 4-diphosphate (HMBPP) into a mixture of isopentenyl diphosphate (IPP) and dimethylallyl diphosphate (DMAPP). Acts in the terminal step of the DOXP/MEP pathway for isoprenoid precursor biosynthesis. The chain is 4-hydroxy-3-methylbut-2-enyl diphosphate reductase from Salmonella agona (strain SL483).